The following is a 447-amino-acid chain: C4-dicarboxylate transport protein (447 aa).

Transmembrane regions (helical) follow at residues 22-42 (FQVI…PLVG), 52-72 (FINL…VTGI), 90-110 (AYFL…AHVV), 159-179 (GNIL…ASVG), 199-219 (LVHI…AFTI), 232-252 (WLVG…LGVV), 325-347 (LFIA…LLVA), and 366-386 (AATL…ILGV).

The protein belongs to the dicarboxylate/amino acid:cation symporter (DAACS) (TC 2.A.23) family.

It localises to the cell inner membrane. Functionally, responsible for the transport of dicarboxylates such as succinate, fumarate, and malate from the periplasm across the membrane. The chain is C4-dicarboxylate transport protein from Stenotrophomonas maltophilia (strain R551-3).